Consider the following 250-residue polypeptide: DNA repair protein RecO (250 aa).

It belongs to the RecO family.

In terms of biological role, involved in DNA repair and RecF pathway recombination. In Staphylococcus aureus (strain Mu3 / ATCC 700698), this protein is DNA repair protein RecO.